We begin with the raw amino-acid sequence, 142 residues long: FAD synthase (142 aa).

ATP is bound by residues Thr9–Phe10, His14–His17, and Asp92.

Belongs to the archaeal FAD synthase family. Homodimer. A divalent metal cation is required as a cofactor.

The enzyme catalyses FMN + ATP + H(+) = FAD + diphosphate. Its pathway is cofactor biosynthesis; FAD biosynthesis; FAD from FMN: step 1/1. Functionally, catalyzes the transfer of the AMP portion of ATP to flavin mononucleotide (FMN) to produce flavin adenine dinucleotide (FAD) coenzyme. The polypeptide is FAD synthase (Haloferax volcanii (strain ATCC 29605 / DSM 3757 / JCM 8879 / NBRC 14742 / NCIMB 2012 / VKM B-1768 / DS2) (Halobacterium volcanii)).